Here is a 103-residue protein sequence, read N- to C-terminus: Large ribosomal subunit protein eL42 (103 aa).

Residues Cys18 and Cys21 each contribute to the Zn(2+) site. Residues 18–81 form a C4-type zinc finger; that stretch reads CPKCRTHTEH…TVLKLKCSKC (64 aa). The interval 40–62 is disordered; it reads LSEGERRYARKKKGYGSKRKPEQ. Basic residues predominate over residues 47–57; sequence YARKKKGYGSK. Zn(2+) is bound by residues Cys78 and Cys81.

It belongs to the eukaryotic ribosomal protein eL42 family. In terms of assembly, part of the 50S ribosomal subunit. Requires Zn(2+) as cofactor.

Functionally, binds to the 23S rRNA. This chain is Large ribosomal subunit protein eL42, found in Desulfurococcus amylolyticus (strain DSM 18924 / JCM 16383 / VKM B-2413 / 1221n) (Desulfurococcus kamchatkensis).